A 122-amino-acid polypeptide reads, in one-letter code: Large ribosomal subunit protein bL17 (122 aa).

The protein belongs to the bacterial ribosomal protein bL17 family. Part of the 50S ribosomal subunit. Contacts protein L32.

This Staphylococcus carnosus (strain TM300) protein is Large ribosomal subunit protein bL17.